We begin with the raw amino-acid sequence, 568 residues long: MHQQSPVDDVTALNSSALTMSEYPEGESPLQLQDVDSSRVGGHILSPIFNSSSPSLPVESHPVCIQSPYTDLGHDFTTLPFYSPALLGYGTSPLSECSSVRQSLSPTLFWPPHSQVSSLALHQQHTRLQQNHPTGGTWTELTPHDHSEEEYRKPLVKRVADAEETSTSLRGKADMHYCAVCSDYASGYHYGVWSCEGCKAFFKRSIQGHNDYICPATNQCTIDKNRRKSCQACRLRKCYEVGMMKCGLRRDRGSYQQRGAQQKRLARFSGRMRTSGPRSQEMKSVPCPLSGNEVVNMALTPEELIARIMDAEPPEIYLMKDMKKPFTEANVMMSLTNLADKELVHMISWAKKVPGFVELSLFDQVHLLECCWLEVLMLGLMWRSVNHPGKLIFSPDLSLSRDEGSCVQGFVEIFDMLLAATSRFRELKLQREEYVCLKAMILLNSNMCLSSSEGGEELQRRSKLLCLLDSVTDALVWAISKTGLSFQQRSTRLAHLLMLLSHIRHLSNKGMDHLHCMKMKKMVPLYDLLLEMLDAHIMHGSRLSHSGPAPKESTGVQEATLSVLKNDL.

Positions 1 to 177 (MHQQSPVDDV…SLRGKADMHY (177 aa)) are modulating. 2 NR C4-type zinc fingers span residues 178 to 198 (CAVC…CEGC) and 214 to 238 (CPAT…LRKC). The segment at residues 178-243 (CAVCSDYASG…RLRKCYEVGM (66 aa)) is a DNA-binding region (nuclear receptor). The NR LBD domain occupies 300–536 (TPEELIARIM…DLLLEMLDAH (237 aa)).

This sequence belongs to the nuclear hormone receptor family. NR3 subfamily. Binds DNA as a homodimer. Can form a heterodimer with ER-alpha.

It is found in the nucleus. Binds estrogens with an affinity similar to that of ER-alpha, and activates expression of reporter genes containing estrogen response elements (ERE) in an estrogen-dependent manner. The polypeptide is Estrogen receptor beta (esr2) (Oncorhynchus mykiss (Rainbow trout)).